The chain runs to 91 residues: Virion membrane protein A14 homolog (91 aa).

The Intravirion segment spans residues 1-12; the sequence is MDPLGFFRNRPS. A helical transmembrane segment spans residues 13–33; that stretch reads YVVVFGIILLIVACICAYIEL. Residues 34–46 lie on the Virion surface side of the membrane; sequence SKSGKPADSALRS. Residues 47–67 traverse the membrane as a helical segment; that stretch reads ISIISFILAILLLLGIILFSG. Residues 68-91 are Intravirion-facing; that stretch reads YNRYCTGNVVDESRYATSPGTEIQ.

It belongs to the chordopoxvirinae A14 family. Homodimer; disulfide-linked. Interacts with A17. Phosphorylated by viral F10 kinase, phosphorylation state is regulated by H1 phosphatase.

The protein resides in the virion membrane. Envelope protein which is a major component of the mature virion (MV) membrane. Essential for membrane biogenesis. Is required, together with A17, to form bona fide crescents, which can progress to form the immature virion (IV) membrane. A14 and A17 form a lattice that is stabilized by disulfide bonds and serves as an anchor within the viral membrane to which several other proteins important in virion structure and morphogenesis attach. This Fowlpox virus (strain NVSL) (FPV) protein is Virion membrane protein A14 homolog.